The primary structure comprises 584 residues: 65 kDa protein (584 aa).

The region spanning 459–548 is the Toprim domain; the sequence is YDLYIAESAI…TKKVENWLPP (90 aa).

This chain is 65 kDa protein, found in Zymomonas mobilis subsp. mobilis (strain ATCC 10988 / DSM 424 / LMG 404 / NCIMB 8938 / NRRL B-806 / ZM1).